Reading from the N-terminus, the 1043-residue chain is Rho GTPase-activating protein gacZ (1043 aa).

The disordered stretch occupies residues 1–44 (MTTTNTSIFGPRVNNSKFNNNNNNNNNNNNNNNNTSNNNNSNII). Over residues 14 to 44 (NNSKFNNNNNNNNNNNNNNNNTSNNNNSNII) the composition is skewed to low complexity. Residues C71, C74, C82, C85, C91, H95, H103, and C107 each contribute to the Zn(2+) site. The segment at 71–107 (CVICKSKNVQVCTGCLMVYYCGAEHQNIDWPNHKSLC) adopts an MYND-type; atypical zinc-finger fold. 6 disordered regions span residues 137-163 (SGNRVSNSNNNSSIYSNSTGNINNNNN), 199-532 (HLQQ…NNSN), 546-594 (DGLS…NGNR), 614-690 (FYQS…TNNN), 706-772 (NTSQ…QLSA), and 801-842 (NKVS…NNNN). Over residues 201–225 (QQQIQQTQQTQQQPPPTTTSIPTQP) the composition is skewed to low complexity. A compositionally biased stretch (polar residues) spans 241-253 (SFKSSSSGDNTPI). 2 stretches are compositionally biased toward low complexity: residues 254 to 293 (NQSPSSSSSSLVSSTNNNNNNNNNNNNNNNINSNSNNMSG) and 307 to 411 (NSIN…TNEE). Over residues 453–466 (GTLKQSSSSDSIYF) the composition is skewed to polar residues. Low complexity-rich tracts occupy residues 467 to 532 (NNNN…NNSN) and 547 to 594 (GLSY…NGNR). Positions 615-625 (YQSNKNQSNGY) are enriched in polar residues. Residues 644–671 (ENDDSHEECDDDDDDDDGGGQDGDDGLD) show a composition bias toward acidic residues. Composition is skewed to low complexity over residues 726-736 (DTQSQSTNSTT), 752-771 (SSDDLQQQQTQTQQQQSQLS), 801-821 (NKVSEVTSKSKSSTSVNNNNN), and 829-842 (NNNNNNNNINNNNN). Residues 825–852 (DHNENNNNNNNNINNNNNNNNNNIENII) are a coiled coil. One can recognise a Rho-GAP domain in the interval 855-1043 (IPLEEAVKKS…FGIQTYNYNS (189 aa)).

The protein resides in the cytoplasm. In terms of biological role, rho GTPase-activating protein involved in the signal transduction pathway. This chain is Rho GTPase-activating protein gacZ (gacZ), found in Dictyostelium discoideum (Social amoeba).